Here is a 262-residue protein sequence, read N- to C-terminus: Hemin import ATP-binding protein HmuV (262 aa).

Residues 3-244 (LQARNLTLAR…DHMRRVYGIE (242 aa)) form the ABC transporter domain. 35-42 (GANGAGKS) is a binding site for ATP.

Belongs to the ABC transporter superfamily. Heme (hemin) importer (TC 3.A.1.14.5) family. In terms of assembly, the complex is composed of two ATP-binding proteins (HmuV), two transmembrane proteins (HmuU) and a solute-binding protein (HmuT).

The protein localises to the cell inner membrane. In terms of biological role, part of the ABC transporter complex HmuTUV involved in hemin import. Responsible for energy coupling to the transport system. In Bordetella bronchiseptica (strain ATCC BAA-588 / NCTC 13252 / RB50) (Alcaligenes bronchisepticus), this protein is Hemin import ATP-binding protein HmuV.